We begin with the raw amino-acid sequence, 424 residues long: Na(+)/H(+) antiporter NhaA (424 aa).

Helical transmembrane passes span 23-43 (ILLI…LATL), 65-85 (VHLW…GLEI), 102-122 (LPFI…MFFV), 131-151 (GWAI…ALLG), 160-180 (LFLV…IALF), 183-203 (AKIN…MFAC), 211-231 (LLVY…SGVH), 265-285 (ALHP…NAGV), 303-323 (IAAG…WLAV), 341-361 (AVSM…SLAF), and 373-393 (IGIL…LRLA).

The protein belongs to the NhaA Na(+)/H(+) (TC 2.A.33) antiporter family.

It localises to the cell inner membrane. It carries out the reaction Na(+)(in) + 2 H(+)(out) = Na(+)(out) + 2 H(+)(in). In terms of biological role, na(+)/H(+) antiporter that extrudes sodium in exchange for external protons. In Sphingopyxis alaskensis (strain DSM 13593 / LMG 18877 / RB2256) (Sphingomonas alaskensis), this protein is Na(+)/H(+) antiporter NhaA.